A 504-amino-acid chain; its full sequence is Protein Dok-7 (504 aa).

The 106-residue stretch at 4 to 109 folds into the PH domain; that stretch reads AALVEGQVKL…WDTRIRYALG (106 aa). The 106-residue stretch at 105–210 folds into the IRS-type PTB domain; sequence RYALGEVHRF…RGISPTKGPF (106 aa). Disordered regions lie at residues 210-232, 248-348, and 371-483; these read FGLR…ERVA, LSHS…HSSY, and SLLS…PHAG. Positions 263 to 280 are enriched in low complexity; the sequence is LSSSSSEASHSDISASSR. 3 stretches are compositionally biased toward polar residues: residues 285-297, 331-341, and 421-430; these read PEQS…TSQE, GRQSSSDSGIA, and PASQGSSDHG.

As to quaternary structure, homodimer. Forms a heterotetramer composed of 2 DOK7 and 2 MUSK molecules which facilitates MUSK trans-autophosphorylation on tyrosine residue and activation. Interacts (via IRS-type PTB domain) with MUSK (via cytoplasmic part); requires MUSK phosphorylation.

The protein resides in the cell membrane. It localises to the synapse. Functionally, probable muscle-intrinsic activator of MUSK that plays an essential role in neuromuscular synaptogenesis. Acts in aneural activation of MUSK and subsequent acetylcholine receptor (AchR) clustering in myotubes. Induces autophosphorylation of MUSK. The protein is Protein Dok-7 (Dok7) of Mus musculus (Mouse).